The chain runs to 265 residues: Gamma-secretase subunit APH-1A (265 aa).

Topologically, residues 1–2 (MG) are lumenal. Residues 3–23 (AAVFFGCTFVAFGPAFALFLI) form a helical membrane-spanning segment. Residues 24-31 (TVAGDPLR) lie on the Cytoplasmic side of the membrane. A helical membrane pass occupies residues 32–52 (VIILVAGAFFWLVSLLLASVV). Residues 53-68 (WFILVHVTDRSDARLQ) are Lumenal-facing. The chain crosses the membrane as a helical span at residues 69–89 (YGLLIFGAAVSVLLQEVFRFA). The Cytoplasmic portion of the chain corresponds to 90 to 118 (YYKLLKKADEGLASLSEDGRSPISIRQMA). The helical transmembrane segment at 119 to 139 (YVSGLSFGIISGVFSVINILA) threads the bilayer. The Lumenal portion of the chain corresponds to 140–158 (DALGPGVVGIHGDSPYYFL). Residues 159 to 179 (TSAFLTAAIILLHTFWGVVFF) form a helical membrane-spanning segment. Residues 180-186 (DACERRR) lie on the Cytoplasmic side of the membrane. A helical membrane pass occupies residues 187-207 (YWALGLVVGSHLLTSGLTFLN). Residues 208–213 (PWYEAS) lie on the Lumenal side of the membrane. The chain crosses the membrane as a helical span at residues 214–234 (LLPIYAVTVSMGLWAFITAGG). The Cytoplasmic segment spans residues 235–265 (SLRSIQRSLLCRRQEDSRVMVYSALRIPPED).

The protein belongs to the APH-1 family. The functional gamma-secretase complex is composed of at least four polypeptides: a presenilin homodimer (PSEN1 or PSEN2), nicastrin (NCSTN), APH1 (APH1A or APH1B) and PSENEN/PEN2. As to expression, widely expressed. Expressed in leukocytes, lung, placenta, small intestine, liver, kidney, spleen thymus, skeletal muscle, heart and brain. Isoform 1 and isoform 2 are nearly expressed at the same level.

It localises to the endoplasmic reticulum membrane. The protein localises to the golgi apparatus. Its subcellular location is the golgi stack membrane. Functionally, non-catalytic subunit of the gamma-secretase complex, an endoprotease complex that catalyzes the intramembrane cleavage of integral membrane proteins such as Notch receptors and APP (amyloid-beta precursor protein). Required for normal gamma-secretase assembly. The gamma-secretase complex plays a role in Notch and Wnt signaling cascades and regulation of downstream processes via its role in processing key regulatory proteins, and by regulating cytosolic CTNNB1 levels. In Homo sapiens (Human), this protein is Gamma-secretase subunit APH-1A (APH1A).